The following is a 1012-amino-acid chain: Alanine--tRNA ligase, mitochondrial (1012 aa).

The N-terminal 24 residues, 1 to 24, are a transit peptide targeting the mitochondrion; sequence MYNSAKQLQRVLTAREIRKTFLDH. The Zn(2+) site is built by H656, H660, C766, and H770.

The protein belongs to the class-II aminoacyl-tRNA synthetase family. Monomer. Requires Zn(2+) as cofactor.

It is found in the mitochondrion. It catalyses the reaction tRNA(Ala) + L-alanine + ATP = L-alanyl-tRNA(Ala) + AMP + diphosphate. In terms of biological role, catalyzes the attachment of alanine to tRNA(Ala) in a two-step reaction: alanine is first activated by ATP to form Ala-AMP and then transferred to the acceptor end of tRNA(Ala). Also edits incorrectly charged tRNA(Ala) via its editing domain. The chain is Alanine--tRNA ligase, mitochondrial from Drosophila melanogaster (Fruit fly).